Consider the following 78-residue polypeptide: Large ribosomal subunit protein bL28 (78 aa).

This sequence belongs to the bacterial ribosomal protein bL28 family.

This chain is Large ribosomal subunit protein bL28, found in Methylobacillus flagellatus (strain ATCC 51484 / DSM 6875 / VKM B-1610 / KT).